We begin with the raw amino-acid sequence, 371 residues long: Cytochrome b (371 aa).

Helical transmembrane passes span 25–45 (FGSM…FLAV), 69–90 (WMMQ…YIHI), 105–125 (WLSG…XXXX), and 170–190 (XXXX…LHIM). Heme b is bound by residues His75 and His89. Heme b contacts are provided by Xaa174 and His188. His193 is a binding site for a ubiquinone. 4 consecutive transmembrane segments (helical) span residues 218–238 (YKDL…VSFL), 280–300 (LGGA…PFTH), 312–332 (IMQL…WAAT), and 339–358 (FTMI…ITNP).

Belongs to the cytochrome b family. In terms of assembly, the cytochrome bc1 complex contains 3 respiratory subunits (MT-CYB, CYC1 and UQCRFS1), 2 core proteins (UQCRC1 and UQCRC2) and probably 6 low-molecular weight proteins. Requires heme b as cofactor.

It is found in the mitochondrion inner membrane. Its function is as follows. Component of the ubiquinol-cytochrome c reductase complex (complex III or cytochrome b-c1 complex) that is part of the mitochondrial respiratory chain. The b-c1 complex mediates electron transfer from ubiquinol to cytochrome c. Contributes to the generation of a proton gradient across the mitochondrial membrane that is then used for ATP synthesis. In Eryx jaculus (Javelin sand boa), this protein is Cytochrome b (MT-CYB).